The following is a 307-amino-acid chain: Transcription factor DIVARICATA (307 aa).

Positions 21 to 74 (RSTTRWTAAENKAFENALAVFDENTPNRWERVAERVPGKTVGDVMRQYKELEDD) constitute an SANT domain. The tract at residues 109 to 133 (QSYGTGGRKSSSGRPSEQERKKGVP) is disordered. Residues 124 to 133 (SEQERKKGVP) show a composition bias toward basic and acidic residues. An HTH myb-type domain is found at 126 to 182 (QERKKGVPWTEEEHKLFLMGLKKYGKGDWRNISRNFVITRTPTQVASHAQKYFIRQL). The H-T-H motif DNA-binding region spans 154 to 178 (WRNISRNFVITRTPTQVASHAQKYF). Polar residues-rich tracts occupy residues 196–206 (ITTVNLSDNQT) and 222–231 (MAQQQTSSTS). The segment at 196–231 (ITTVNLSDNQTPSPDNKKPPSSPDHSMAQQQTSSTS) is disordered.

The protein resides in the nucleus. Its function is as follows. Involved in the dorsovental asymmetry of flowers. Promotes ventral identity. The polypeptide is Transcription factor DIVARICATA (DIVARICATA) (Antirrhinum majus (Garden snapdragon)).